A 310-amino-acid polypeptide reads, in one-letter code: Coproporphyrin III ferrochelatase (310 aa).

Fe-coproporphyrin III contacts are provided by residues Tyr13, Arg30, 46 to 47, Ser54, and Tyr125; that span reads RY. Residues His183 and Glu264 each contribute to the Fe(2+) site.

It belongs to the ferrochelatase family.

The protein resides in the cytoplasm. The catalysed reaction is Fe-coproporphyrin III + 2 H(+) = coproporphyrin III + Fe(2+). Its pathway is porphyrin-containing compound metabolism; protoheme biosynthesis. Functionally, involved in coproporphyrin-dependent heme b biosynthesis. Catalyzes the insertion of ferrous iron into coproporphyrin III to form Fe-coproporphyrin III. In Geobacillus sp. (strain WCH70), this protein is Coproporphyrin III ferrochelatase.